Reading from the N-terminus, the 186-residue chain is ATP synthase subunit delta (186 aa).

Belongs to the ATPase delta chain family. F-type ATPases have 2 components, F(1) - the catalytic core - and F(0) - the membrane proton channel. F(1) has five subunits: alpha(3), beta(3), gamma(1), delta(1), epsilon(1). F(0) has three main subunits: a(1), b(2) and c(10-14). The alpha and beta chains form an alternating ring which encloses part of the gamma chain. F(1) is attached to F(0) by a central stalk formed by the gamma and epsilon chains, while a peripheral stalk is formed by the delta and b chains.

It is found in the cell inner membrane. In terms of biological role, f(1)F(0) ATP synthase produces ATP from ADP in the presence of a proton or sodium gradient. F-type ATPases consist of two structural domains, F(1) containing the extramembraneous catalytic core and F(0) containing the membrane proton channel, linked together by a central stalk and a peripheral stalk. During catalysis, ATP synthesis in the catalytic domain of F(1) is coupled via a rotary mechanism of the central stalk subunits to proton translocation. Functionally, this protein is part of the stalk that links CF(0) to CF(1). It either transmits conformational changes from CF(0) to CF(1) or is implicated in proton conduction. The protein is ATP synthase subunit delta of Brucella anthropi (strain ATCC 49188 / DSM 6882 / CCUG 24695 / JCM 21032 / LMG 3331 / NBRC 15819 / NCTC 12168 / Alc 37) (Ochrobactrum anthropi).